Reading from the N-terminus, the 72-residue chain is DNA-directed RNA polymerase subunit omega (72 aa).

It belongs to the RNA polymerase subunit omega family. In terms of assembly, the RNAP catalytic core consists of 2 alpha, 1 beta, 1 beta' and 1 omega subunit. When a sigma factor is associated with the core the holoenzyme is formed, which can initiate transcription.

It carries out the reaction RNA(n) + a ribonucleoside 5'-triphosphate = RNA(n+1) + diphosphate. In terms of biological role, promotes RNA polymerase assembly. Latches the N- and C-terminal regions of the beta' subunit thereby facilitating its interaction with the beta and alpha subunits. The chain is DNA-directed RNA polymerase subunit omega from Francisella philomiragia subsp. philomiragia (strain ATCC 25017 / CCUG 19701 / FSC 153 / O#319-036).